The sequence spans 25 residues: Css54 (25 aa).

Expressed by the venom gland.

It is found in the secreted. The protein resides in the target cell membrane. Its function is as follows. Amphipathic peptide that shows antibacterial activity against E.coli (MIC=12.5 ug/ml) and S.aureus (MIC=12.5 ug/ml). Has hemolytic activity against human erythrocytes (25 uM provokes 83% of hemolysis). May act by disrupting the integrity of the bacterial cell membrane. Increases efficacy of antibiotics (ethambutol, pyrazinamide, isoniazid, rifampicin) when tested against S.aureus, probably by facilitating their incorporation into the bacteria. The sequence is that of Css54 from Centruroides suffusus (Durango bark scorpion).